The following is a 59-amino-acid chain: Large ribosomal subunit protein bL32 (59 aa).

The protein belongs to the bacterial ribosomal protein bL32 family.

This is Large ribosomal subunit protein bL32 from Desulfitobacterium hafniense (strain Y51).